Reading from the N-terminus, the 779-residue chain is Serine/threonine-protein kinase SIK1 (779 aa).

Positions 27 to 278 (YDVERTLGKG…IAQIRQHRWM (252 aa)) constitute a Protein kinase domain. ATP contacts are provided by residues 33–41 (LGKGNFAVV) and K56. D149 acts as the Proton acceptor in catalysis. Phosphothreonine; by LKB1 and GSK3-beta is present on T182. Phosphoserine; by autocatalysis is present on S186. The UBA domain occupies 303-343 (DYNEQVLGIMQALGIDRQRTIESLQNSSYNHFAAIYYLLLE). At T322 the chain carries Phosphothreonine; by CaMK1. Disordered regions lie at residues 350-375 (SAQP…LSSL) and 449-472 (EARQ…STGR). Positions 363–373 (RQPQLRSSDLS) are enriched in polar residues. Residue S577 is modified to Phosphoserine; by PKA. An RK-rich region region spans residues 586 to 612 (KAFRQQLRKNARTKGFLGLNKIKGLAR). Residues 621 to 641 (TPRGGMSTFHTPAPSSGLQGC) are disordered. A compositionally biased stretch (polar residues) spans 628 to 641 (TFHTPAPSSGLQGC).

This sequence belongs to the protein kinase superfamily. CAMK Ser/Thr protein kinase family. AMPK subfamily. Interacts (when phosphorylated on Thr-182 and Ser-186) with YWHAZ. Interacts with ATP1A1. The cofactor is Mg(2+). Post-translationally, phosphorylated at Thr-182 by STK11/LKB1 in complex with STE20-related adapter-alpha (STRADA) pseudo kinase and CAB39, leading to its activation. Phosphorylation at Thr-182 promotes autophosphorylation at Ser-186, which is required for sustained activity. Autophosphorylation at Ser-186 is maintained by sequential phosphorylation at Thr-182 by GSK3-beta. GSK3-beta cannot initiate phosphorylation at Thr-182, it can only maintain it. Phosphorylation at Ser-577 by PKA promotes translocation to the cytoplasm. Phosphorylation at Thr-322 by CaMK1 following intracellular sodium concentration leads to activation. In terms of tissue distribution, expressed in lung, skin, ovary, heart and stomach. No expression in brain, liver or adult skeletal muscle but is present in skeletal muscle progenitor cells of the somite beginning at 9.5 dpc. Present at 8.0 dpc in the monolayer of presumptive myocardial cells but rapidly down-regulated at 8.5 dpc upon primitive ventricle formation, although still present in myocardial cells that will populate the primitive atrium and bulbus cordis. At 9.5 dpc expression is down-regulated in the primitive atrium but observed in the sinus venosus and truncus arteriosus.

It localises to the cytoplasm. The protein localises to the nucleus. It catalyses the reaction L-seryl-[protein] + ATP = O-phospho-L-seryl-[protein] + ADP + H(+). It carries out the reaction L-threonyl-[protein] + ATP = O-phospho-L-threonyl-[protein] + ADP + H(+). With respect to regulation, activated by phosphorylation on Thr-182. Also activated by phosphorylation on Thr-322 in response to increases in intracellular sodium in parallel with elevations in intracellular calcium through the reversible sodium/calcium exchanger. Serine/threonine-protein kinase involved in various processes such as cell cycle regulation, gluconeogenesis and lipogenesis regulation, muscle growth and differentiation and tumor suppression. Phosphorylates HDAC4, HDAC5, PPME1, SREBF1, CRTC1/TORC1 and CRTC2/TORC2. Acts as a tumor suppressor and plays a key role in p53/TP53-dependent anoikis, a type of apoptosis triggered by cell detachment: required for phosphorylation of p53/TP53 in response to loss of adhesion and is able to suppress metastasis. Part of a sodium-sensing signaling network, probably by mediating phosphorylation of PPME1: following increases in intracellular sodium, SIK1 is activated by CaMK1 and phosphorylates PPME1 subunit of protein phosphatase 2A (PP2A), leading to dephosphorylation of sodium/potassium-transporting ATPase ATP1A1 and subsequent increase activity of ATP1A1. Acts as a regulator of muscle cells by phosphorylating and inhibiting class II histone deacetylases HDAC4 and HDAC5, leading to promote expression of MEF2 target genes in myocytes. Also required during cardiomyogenesis by regulating the exit of cardiomyoblasts from the cell cycle via down-regulation of CDKN1C/p57Kip2. Acts as a regulator of hepatic gluconeogenesis by phosphorylating and repressing the CREB-specific coactivators CRTC1/TORC1 and CRTC2/TORC2, leading to inhibit CREB activity. Also regulates hepatic lipogenesis by phosphorylating and inhibiting SREBF1. In concert with CRTC1/TORC1, regulates the light-induced entrainment of the circadian clock by attenuating PER1 induction; represses CREB-mediated transcription of PER1 by phosphorylating and deactivating CRTC1/TORC1. This is Serine/threonine-protein kinase SIK1 (Sik1) from Mus musculus (Mouse).